A 764-amino-acid polypeptide reads, in one-letter code: FHF complex subunit HOOK interacting protein 2A (764 aa).

Residues 190 to 236 (SEDGPKGQDPGSGDVSQCQQPQELSGATGVEPTESEEEPPHQMDDLS) form a disordered region. Residues 203 to 214 (DVSQCQQPQELS) show a composition bias toward polar residues.

It belongs to the FHIP family.

In terms of biological role, may be required for proper functioning of the nervous system. In Mus musculus (Mouse), this protein is FHF complex subunit HOOK interacting protein 2A.